The primary structure comprises 391 residues: 3-ketoacyl-CoA thiolase (391 aa).

Cys95 (acyl-thioester intermediate) is an active-site residue. Catalysis depends on proton acceptor residues His347 and Cys377.

This sequence belongs to the thiolase-like superfamily. Thiolase family. As to quaternary structure, heterotetramer of two alpha chains (FadB) and two beta chains (FadA).

Its subcellular location is the cytoplasm. It catalyses the reaction an acyl-CoA + acetyl-CoA = a 3-oxoacyl-CoA + CoA. It functions in the pathway lipid metabolism; fatty acid beta-oxidation. Its function is as follows. Catalyzes the final step of fatty acid oxidation in which acetyl-CoA is released and the CoA ester of a fatty acid two carbons shorter is formed. This is 3-ketoacyl-CoA thiolase from Pseudomonas putida (strain ATCC 700007 / DSM 6899 / JCM 31910 / BCRC 17059 / LMG 24140 / F1).